The primary structure comprises 228 residues: LexA repressor (228 aa).

The H-T-H motif DNA-binding region spans 28–48 (IREIGEALDIRSTNGVNDHLK). Residues Ser-146 and Lys-183 each act as for autocatalytic cleavage activity in the active site.

Belongs to the peptidase S24 family. Homodimer.

It catalyses the reaction Hydrolysis of Ala-|-Gly bond in repressor LexA.. In terms of biological role, represses a number of genes involved in the response to DNA damage (SOS response), including recA and lexA. In the presence of single-stranded DNA, RecA interacts with LexA causing an autocatalytic cleavage which disrupts the DNA-binding part of LexA, leading to derepression of the SOS regulon and eventually DNA repair. The chain is LexA repressor from Anaeromyxobacter dehalogenans (strain 2CP-1 / ATCC BAA-258).